Here is a 554-residue protein sequence, read N- to C-terminus: Protein NODULATION SIGNALING PATHWAY 1 (554 aa).

Positions 76–165 are disordered; it reads TTSTTSLEPN…NSNNGNNKDG (90 aa). Over residues 82-91 the composition is skewed to polar residues; sequence LEPNSFNNIP. Over residues 95 to 107 the composition is skewed to basic and acidic residues; the sequence is LPKKRNAEDELSL. The segment covering 150-162 has biased composition (low complexity); the sequence is AKANGSNSNNGNN. Positions 159-548 constitute a GRAS domain; it reads NGNNKDGRWA…QPVSFCSLWK (390 aa). Residues 166–227 form a leucine repeat I (LRI) region; that stretch reads RWAEQLLNPC…HHLSSSSSST (62 aa). A VHIID region spans residues 246–315; the sequence is LLKFYEFSPW…GGPPPLVRLT (70 aa). The short motif at 281-285 is the VHIID element; sequence LHILD. A leucine repeat II (LRII) region spans residues 331–373; that stretch reads TPFSIGPCGDTFSSGLLGYAQSLNVNLQIKKLDNHPLQTLNAK. Residues 383–468 are PFYRE; the sequence is LIVCAQFRLH…RDSDERKMME (86 aa). The interval 471–548 is SAW; the sequence is AAKALTNQRE…QPVSFCSLWK (78 aa).

It belongs to the GRAS family. As to expression, expressed in epidermal and cortical root cells.

It is found in the nucleus. Functionally, transcriptional regulator essential for Nod-factor-induced gene expression. Acts downstream of calcium spiking. May be a target of DMI3, a calcium/calmodulin-dependent protein kinase (CCaMK). Is essential for Nod factor-elicited expression of ERN1. Transcription factor involved in the control of strigolactone biosynthesis in roots through the activation of the beta-carotene isomerase D27, which participates in a pathway leading to biosynthesis of strigolactones. This is Protein NODULATION SIGNALING PATHWAY 1 from Medicago truncatula (Barrel medic).